We begin with the raw amino-acid sequence, 166 residues long: Putative 4-hydroxy-4-methyl-2-oxoglutarate aldolase (166 aa).

Residues 74 to 77 (GDQI) and R96 contribute to the substrate site. D97 contributes to the a divalent metal cation binding site.

It belongs to the class II aldolase/RraA-like family. As to quaternary structure, homotrimer. A divalent metal cation is required as a cofactor.

The enzyme catalyses 4-hydroxy-4-methyl-2-oxoglutarate = 2 pyruvate. It catalyses the reaction oxaloacetate + H(+) = pyruvate + CO2. In terms of biological role, catalyzes the aldol cleavage of 4-hydroxy-4-methyl-2-oxoglutarate (HMG) into 2 molecules of pyruvate. Also contains a secondary oxaloacetate (OAA) decarboxylase activity due to the common pyruvate enolate transition state formed following C-C bond cleavage in the retro-aldol and decarboxylation reactions. The polypeptide is Putative 4-hydroxy-4-methyl-2-oxoglutarate aldolase (Xanthomonas oryzae pv. oryzae (strain MAFF 311018)).